A 140-amino-acid polypeptide reads, in one-letter code: Nucleoside diphosphate kinase (140 aa).

Lysine 11, phenylalanine 59, arginine 87, threonine 93, arginine 104, and asparagine 114 together coordinate ATP. Histidine 117 functions as the Pros-phosphohistidine intermediate in the catalytic mechanism.

This sequence belongs to the NDK family. Homotetramer. The cofactor is Mg(2+).

It is found in the cytoplasm. It catalyses the reaction a 2'-deoxyribonucleoside 5'-diphosphate + ATP = a 2'-deoxyribonucleoside 5'-triphosphate + ADP. The enzyme catalyses a ribonucleoside 5'-diphosphate + ATP = a ribonucleoside 5'-triphosphate + ADP. Functionally, major role in the synthesis of nucleoside triphosphates other than ATP. The ATP gamma phosphate is transferred to the NDP beta phosphate via a ping-pong mechanism, using a phosphorylated active-site intermediate. The sequence is that of Nucleoside diphosphate kinase from Methylobacterium sp. (strain 4-46).